The following is a 220-amino-acid chain: MKNQNTPIAFEGFPFIAGFAALTLLTALSAGKLCSAILYGFSALFALLTLFSLYFFRNPQRTPPADERAVVAPADGTVIVVDRVPVTPLGHEALKISIFMSVFNVHVNRVPFSGRVVELTHTPGKFFDVRDSRSSCENERSTIVLETVSGLRMAFVQVAGLIARRIVCYARNGEMLERGKRYGLIRFGSRLDVYLPPDVQPLVKLGDKTIAGETVLGRLG.

Ser-189 serves as the catalytic Schiff-base intermediate with substrate; via pyruvic acid. Pyruvic acid (Ser); by autocatalysis is present on Ser-189.

Belongs to the phosphatidylserine decarboxylase family. PSD-A subfamily. As to quaternary structure, heterodimer of a large membrane-associated beta subunit and a small pyruvoyl-containing alpha subunit. The cofactor is pyruvate. Post-translationally, is synthesized initially as an inactive proenzyme. Formation of the active enzyme involves a self-maturation process in which the active site pyruvoyl group is generated from an internal serine residue via an autocatalytic post-translational modification. Two non-identical subunits are generated from the proenzyme in this reaction, and the pyruvate is formed at the N-terminus of the alpha chain, which is derived from the carboxyl end of the proenzyme. The post-translation cleavage follows an unusual pathway, termed non-hydrolytic serinolysis, in which the side chain hydroxyl group of the serine supplies its oxygen atom to form the C-terminus of the beta chain, while the remainder of the serine residue undergoes an oxidative deamination to produce ammonia and the pyruvoyl prosthetic group on the alpha chain.

The protein resides in the cell membrane. It catalyses the reaction a 1,2-diacyl-sn-glycero-3-phospho-L-serine + H(+) = a 1,2-diacyl-sn-glycero-3-phosphoethanolamine + CO2. It functions in the pathway phospholipid metabolism; phosphatidylethanolamine biosynthesis; phosphatidylethanolamine from CDP-diacylglycerol: step 2/2. Catalyzes the formation of phosphatidylethanolamine (PtdEtn) from phosphatidylserine (PtdSer). The polypeptide is Phosphatidylserine decarboxylase proenzyme (Pelobacter propionicus (strain DSM 2379 / NBRC 103807 / OttBd1)).